The sequence spans 105 residues: Biogenesis of lysosome-related organelles complex 1 subunit SNN1 (105 aa).

Residues 70 to 105 (WKDDNERLDSLRKRVDSLKSRFQSLKLRSDKLEQRE) adopt a coiled-coil conformation.

The protein belongs to the SNAPIN family. As to quaternary structure, component of the biogenesis of lysosome-related organelles complex-1 (BLOC-1).

It is found in the endosome. Its function is as follows. Component of the biogenesis of lysosome-related organelles complex-1 (BLOC-1), a complex involved in endosomal cargo sorting. This chain is Biogenesis of lysosome-related organelles complex 1 subunit SNN1 (SNN1), found in Zygosaccharomyces rouxii (strain ATCC 2623 / CBS 732 / NBRC 1130 / NCYC 568 / NRRL Y-229).